We begin with the raw amino-acid sequence, 780 residues long: MTHEEHHAARTLGVGKAIAVLTSGGDAQGMNAAVRAVVRVGIFTGARVFFVHEGYQGLVDGGDHIREATWESVSMMLQLGGTVIGSARCKDFREREGRLRAAHNLVKRGITNLCVIGGDGSLTGADTFRSEWSDLLSDLQKAGKITAEEATRSSYLNIVGLVGSIDNDFCGTDMTIGTDSALHRITEIVDAITTTAQSHQRTFVLEVMGRHCGYLALVTSLSCGADWVFIPECPPDDNWEDHLCRRLSETRTRGSRLNIIIVAEGAIDRNGKPITSEGVKDLVVRRLGYDTRVTVLGHVQRGGTPSAFDRILGSRMGVEAVMALLEGTPDTPACVVSLSGNQAVRLPLMECVQVTKDVTKAMDEKRFDEAMKLRGRSFMNNWEVYKLLAHIRPPAPKSGSYTVAVMNVGAPAAGMNAAVRSTVRIGLIQGNRVLVVHDGFEGPAKGQIEEAGWSYVGGWTGQGGSKLGSKRTLPKKSFEQISANITKFNIQGLVIIGGFEAYTGGLELMEGRKQFDELCIPFVVIPATVSNNVPGSDFSVGADTALNTICTTCDRIKQSAAGTKRRVFIIETMGGYCGYLATMAGLAAGADAAYIFEEPFTIRDLQANVEHLVQKMKTTVKRGLVLRNEKCNENYTTDFIFNLYSEEGKGIFDSRKNVLGHMQQGGSPTPFDRNFATKMGAKAMNWMAGKIKESYRNGRIFANTPDSGCVLGMRKRALVFQPVTELQNQTDFEHRIPKEQWWLKLRPILKILAKYEIDLDTSEHAHLEHISRKRSGEATV.

Position 2 is an N-acetylthreonine (Thr-2). Residues 2–390 (THEEHHAART…NWEVYKLLAH (389 aa)) are N-terminal catalytic PFK domain 1. ATP contacts are provided by residues Gly-25, 88-89 (RC), and 118-121 (GDGS). Asp-119 provides a ligand contact to Mg(2+). Phosphoserine is present on Ser-133. Substrate-binding positions include 164 to 166 (SID), Arg-201, 208 to 210 (MGR), Glu-264, Arg-292, and 298 to 301 (HVQR). The active-site Proton acceptor is Asp-166. Ser-377 carries the phosphoserine modification. The segment at 391–401 (IRPPAPKSGSY) is interdomain linker. The tract at residues 402–780 (TVAVMNVGAP…SRKRSGEATV (379 aa)) is C-terminal regulatory PFK domain 2. Beta-D-fructose 2,6-bisphosphate-binding positions include Arg-471 and 528–532 (TVSNN). Ser-530 is a glycosylation site (O-linked (GlcNAc) serine). Lys-557 is subject to N6-(2-hydroxyisobutyryl)lysine. Beta-D-fructose 2,6-bisphosphate-binding positions include Arg-566, 573–575 (MGG), Glu-629, Arg-655, and 661–664 (HMQQ). Position 667 is a phosphoserine (Ser-667). Arg-735 provides a ligand contact to beta-D-fructose 2,6-bisphosphate. Phosphoserine; by PKA is present on Ser-775.

This sequence belongs to the phosphofructokinase type A (PFKA) family. ATP-dependent PFK group I subfamily. Eukaryotic two domain clade 'E' sub-subfamily. As to quaternary structure, homo- and heterotetramers. Phosphofructokinase (PFK) enzyme functions as a tetramer composed of different combinations of 3 types of subunits, called PFKM (M), PFKL (L) and PFKP (P). The composition of the PFK tetramer differs according to the tissue type it is present in. The kinetic and regulatory properties of the tetrameric enzyme are dependent on the subunit composition, hence can vary across tissues. Interacts (via C-terminus) with HK1 (via N-terminal spermatogenic cell-specific region). The cofactor is Mg(2+). In terms of processing, glcNAcylation decreases enzyme activity.

The protein resides in the cytoplasm. The catalysed reaction is beta-D-fructose 6-phosphate + ATP = beta-D-fructose 1,6-bisphosphate + ADP + H(+). It functions in the pathway carbohydrate degradation; glycolysis; D-glyceraldehyde 3-phosphate and glycerone phosphate from D-glucose: step 3/4. With respect to regulation, allosterically activated by ADP, AMP, or fructose 2,6-bisphosphate, and allosterically inhibited by ATP or citrate. Its function is as follows. Catalyzes the phosphorylation of D-fructose 6-phosphate to fructose 1,6-bisphosphate by ATP, the first committing step of glycolysis. This Oryctolagus cuniculus (Rabbit) protein is ATP-dependent 6-phosphofructokinase, muscle type (PFKM).